A 193-amino-acid polypeptide reads, in one-letter code: Oleosin S1-2 (193 aa).

A2 is subject to N-acetylalanine. Residues 2–39 (ADVRTHAHQVQVHPLRQHEGGIKVVYPQSGPSSTQVLA) form a polar region. 3 helical membrane-spanning segments follow: residues 37–57 (VLAVVAGVPVGGTLLTLAGLT), 66–86 (ILAFPLFLIFSPVIVPAAFVI), and 87–107 (GLAMTGFMASGAIGLTGLSSM). The tract at residues 40–113 (VVAGVPVGGT…LSSMSWVLNH (74 aa)) is hydrophobic. Positions 139-193 (AGQRTKDAGQTIEDKAHDVRESKTYDVRDRDTKGHTASGGDRDTKTTREVRVATT) are disordered. The segment covering 142–193 (RTKDAGQTIEDKAHDVRESKTYDVRDRDTKGHTASGGDRDTKTTREVRVATT) has biased composition (basic and acidic residues).

This sequence belongs to the oleosin family.

It localises to the lipid droplet. Its subcellular location is the membrane. Functionally, may have a structural role to stabilize the lipid body during desiccation of the seed by preventing coalescence of the oil. Probably interacts with both lipid and phospholipid moieties of lipid bodies. May also provide recognition signals for specific lipase anchorage in lipolysis during seedling growth. The sequence is that of Oleosin S1-2 (S1) from Brassica napus (Rape).